The sequence spans 326 residues: tRNA(Ile)-lysidine synthase (326 aa).

33-38 (SGGPDS) is a binding site for ATP.

Belongs to the tRNA(Ile)-lysidine synthase family.

Its subcellular location is the cytoplasm. The catalysed reaction is cytidine(34) in tRNA(Ile2) + L-lysine + ATP = lysidine(34) in tRNA(Ile2) + AMP + diphosphate + H(+). In terms of biological role, ligates lysine onto the cytidine present at position 34 of the AUA codon-specific tRNA(Ile) that contains the anticodon CAU, in an ATP-dependent manner. Cytidine is converted to lysidine, thus changing the amino acid specificity of the tRNA from methionine to isoleucine. The protein is tRNA(Ile)-lysidine synthase of Novosphingobium aromaticivorans (strain ATCC 700278 / DSM 12444 / CCUG 56034 / CIP 105152 / NBRC 16084 / F199).